The chain runs to 78 residues: UPF0270 protein IL0325 (78 aa).

Belongs to the UPF0270 family.

In Idiomarina loihiensis (strain ATCC BAA-735 / DSM 15497 / L2-TR), this protein is UPF0270 protein IL0325.